The chain runs to 256 residues: Peroxisomal membrane protein PMP30A (256 aa).

It belongs to the peroxin-11 family.

Its subcellular location is the peroxisome membrane. Its function is as follows. Involved in peroxisomal proliferation. Could participate in peroxisomal elongation or fission. May be involved in parceling of peroxisomes into regular quanta. The chain is Peroxisomal membrane protein PMP30A (PEX11A) from Candida boidinii (Yeast).